A 469-amino-acid chain; its full sequence is SHC-transforming protein 1 (469 aa).

Positions 1 to 26 (MNKLSGGGGRRTRVEGGQLGGEEWTR) are disordered. Residue serine 29 is modified to Phosphoserine. Position 44 is an N6-acetyllysine (lysine 44). Positions 46 to 229 (MGPGVSYLVR…AGFDGSAWDE (184 aa)) constitute a PID domain. The interval 230 to 373 (EEEELPDHQY…SMAEQLQGES (144 aa)) is CH1. Phosphotyrosine occurs at positions 239, 240, and 313. Residues 322–344 (ARQAGGGAGPPNPSVNGSAPRDL) form a disordered region. The residue at position 339 (serine 339) is a Phosphoserine. The region spanning 374-465 (WFHGKLSRRE…GSELCLQQPV (92 aa)) is the SH2 domain.

As to quaternary structure, interacts with CPNE3; this interaction may mediate the binding of CPNE3 with ERBB2. Interacts with the NPXY motif of tyrosine-phosphorylated IGF1R and INSR in vitro via the PID domain. Once activated, binds to GRB2. Interacts with tyrosine-phosphorylated CD3T and DDR2. Interacts with the N-terminal region of APS. Interacts with phosphorylated LRP1 and IRS4. Interacts with INPP5D/SHIP1 and INPPL1/SHIP2. Interacts with ALK, GAB2, GRB7 and KIT. Interacts with PTPN6/SHP (tyrosine phosphorylated). Identified in a complex containing FGFR4, NCAM1, CDH2, PLCG1, FRS2A, SRC, SHC1, GAP43 and CTTN. Interacts with EPHB1 and GRB2; activates the MAPK/ERK cascade to regulate cell migration. Interacts with PDGFRB (tyrosine-phosphorylated). Interacts with ERBB4. Interacts with TEK/TIE2 (tyrosine-phosphorylated). Interacts with PTK2/FAK1. Interacts with FLT4 (tyrosine-phosphorylated). Interacts with the Trk receptors NTRK1, NTRK2 and NTRK3; in a phosphotyrosine-dependent manner. Interacts with CEACAM1; this interaction is CEACAM1-phosphorylation-dependent and mediates interaction with EGFR or INSR resulting in decrease coupling of SHC1 to the MAPK3/ERK1-MAPK1/ERK2 pathway. Interacts (via PID domain) with PEAK1 (when phosphorylated). Found in a complex with PPP1CA, PPP1CC, SHC1 and PEAK1. In terms of processing, phosphorylated by activated epidermal growth factor receptor. Phosphorylated in response to KIT signaling. Tyrosine phosphorylated in response to FLT3 signaling and by ligand-activated ALK. Tyrosine phosphorylated by TEK/TIE2. Tyrosine phosphorylated by ligand-activated PDGFRB. May be tyrosine phosphorylated by activated PTK2/FAK1. Dephosphorylation by PTPN2 may regulate interaction with GRB2. Phosphorylated in response to FLT4 signaling. Tyrosine phosphorylated by activated PTK2B/PYK2.

The protein resides in the cytoplasm. It is found in the cell junction. Its subcellular location is the focal adhesion. Its function is as follows. Signaling adapter that couples activated growth factor receptors to signaling pathways. Participates in a signaling cascade initiated by activated KIT and KITLG/SCF. Participates in signaling downstream of the angiopoietin receptor TEK/TIE2, and plays a role in the regulation of endothelial cell migration and sprouting angiogenesis. This Rattus norvegicus (Rat) protein is SHC-transforming protein 1 (Shc1).